Reading from the N-terminus, the 143-residue chain is Large ribosomal subunit protein uL11 (143 aa).

This sequence belongs to the universal ribosomal protein uL11 family. In terms of assembly, part of the ribosomal stalk of the 50S ribosomal subunit. Interacts with L10 and the large rRNA to form the base of the stalk. L10 forms an elongated spine to which L12 dimers bind in a sequential fashion forming a multimeric L10(L12)X complex. In terms of processing, one or more lysine residues are methylated.

Forms part of the ribosomal stalk which helps the ribosome interact with GTP-bound translation factors. In Alkalilimnicola ehrlichii (strain ATCC BAA-1101 / DSM 17681 / MLHE-1), this protein is Large ribosomal subunit protein uL11.